We begin with the raw amino-acid sequence, 414 residues long: uncharacterized protein (414 aa).

The signal sequence occupies residues 1-20; that stretch reads MKKLLAIGILCIMVTAVMSG. Residue C21 is the site of S-archaeol cysteine attachment. The 271-residue stretch at 119 to 389 folds into the Fe/B12 periplasmic-binding domain; that stretch reads RVIVMSSTEI…DLATILHPEA (271 aa).

The protein localises to the cell membrane. This is an uncharacterized protein from Methanocaldococcus jannaschii (strain ATCC 43067 / DSM 2661 / JAL-1 / JCM 10045 / NBRC 100440) (Methanococcus jannaschii).